Consider the following 61-residue polypeptide: UPF0434 protein PA14_25520 (61 aa).

It belongs to the UPF0434 family.

The polypeptide is UPF0434 protein PA14_25520 (Pseudomonas aeruginosa (strain UCBPP-PA14)).